A 208-amino-acid polypeptide reads, in one-letter code: dTTP/UTP pyrophosphatase (208 aa).

Residue D78 is the Proton acceptor of the active site.

This sequence belongs to the Maf family. YhdE subfamily. It depends on a divalent metal cation as a cofactor.

The protein resides in the cytoplasm. It carries out the reaction dTTP + H2O = dTMP + diphosphate + H(+). The catalysed reaction is UTP + H2O = UMP + diphosphate + H(+). In terms of biological role, nucleoside triphosphate pyrophosphatase that hydrolyzes dTTP and UTP. May have a dual role in cell division arrest and in preventing the incorporation of modified nucleotides into cellular nucleic acids. In Maricaulis maris (strain MCS10) (Caulobacter maris), this protein is dTTP/UTP pyrophosphatase.